The chain runs to 2171 residues: MLRALVQPATPAYQPLPSHLSAETESTCKGTVVHEAQLNHFYISPGGSNYGSPRPAHANMNANAAAGLAPEHIPTPGAALSWQAAIDAARQAKLMGSAGNATISTVSSTQRKRQQYGKPKKQGSTTATRPPRALLCLTLKNPIRRACISIVEWKPFEIIILLTIFANCVALAIYIPFPEDDSNATNSNLERVEYLFLIIFTVEAFLKVIAYGLLFHPNAYLRNGWNLLDFIIVVVGLFSAILEQATKADGANALGGKGAGFDVKALRAFRVLRPLRLVSGVPSLQVVLNSIIKAMVPLLHIALLVLFVIIIYAIIGLELFMGKMHKTCYNQEGVADVPAEDDPSPCALETGHGRQCQNGTVCKPGWDGPKHGITNFDNFAFAMLTVFQCITMEGWTDVLYWMQDAMGYELPWVYFVSLVIFGSFFVLNLVLGVLSGEFSKEREKAKARGDFQKLREKQQLEEDLKGYLDWITQAEDIDPENEDEGMDEEKPRNMSMPTSETESVNTENVAGGDIEGENCGARLAHRISKSKFSRYWRRWNRFCRRKCRAAVKSNVFYWLVIFLVFLNTLTIASEHYNQPHWLTEVQDTANKALLALFTAEMLLKMYSLGLQAYFVSLFNRFDCFIVCGGILETILVETKVMSPLGISVLRCVRLLRIFKITRYWNSLSNLVASLLNSVRSIASLLLLLFLFIIIFSLLGMQLFGGKFNFDEMQTRRSTFDNFPQSLLTVFQILTGEDWNSVMYDGIMAYGGPSFPGMLVCIYFIILFICGNYILLNVFLAIAVDNLADAESLTSAQKEEEEEKERKKLARTASPEKKQEVVGKPALEEAKEEKIELKSITADGESPPTTKINMDDLQPNESEDKSPYPNPETTGEEDEEEPEMPVGPRPRPLSELHLKEKAVPMPEASAFFIFSPNNRFRLQCHRIVNDTIFTNLILFFILLSSISLAAEDPVQHTSFRNHILFYFDIVFTTIFTIEIALKMTAYGAFLHKGSFCRNYFNILDLLVVSVSLISFGIQSSAINVVKILRVLRVLRPLRAINRAKGLKHVVQCVFVAIRTIGNIVIVTTLLQFMFACIGVQLFKGKLYTCSDSSKQTEAECKGNYITYKDGEVDHPIIQPRSWENSKFDFDNVLAAMMALFTVSTFEGWPELLYRSIDSHTEDKGPIYNYRVEISIFFIIYIIIIAFFMMNIFVGFVIVTFQEQGEQEYKNCELDKNQRQCVEYALKARPLRRYIPKNQHQYKVWYVVNSTYFEYLMFVLILLNTICLAMQHYGQSCLFKIAMNILNMLFTGLFTVEMILKLIAFKPKGYFSDPWNVFDFLIVIGSIIDVILSETNPAEHTQCSPSMNAEENSRISITFFRLFRVMRLVKLLSRGEGIRTLLWTFIKSFQALPYVALLIVMLFFIYAVIGMQVFGKIALNDTTEINRNNNFQTFPQAVLLLFRCATGEAWQDIMLACMPGKKCAPESEPHNSTEGETPCGSSFAVFYFISFYMLCAFLIINLFVAVIMDNFDYLTRDWSILGPHHLDEFKRIWAEYDPEAKGRIKHLDVVTLLRRIQPPLGFGKLCPHRVACKRLVSMNMPLNSDGTVMFNATLFALVRTALRIKTEGNLEQANEELRAIIKKIWKRTSMKLLDQVVPPAGDDEVTVGKFYATFLIQEYFRKFKKRKEQGLVGKPSQRNALSLQAGLRTLHDIGPEIRRAISGDLTAEEELDKAMKEAVSAASEDDIFRRAGGLFGNHVSYYQSDSRSAFPQTFTTQRPLHISKAGNNQGDTESPSHEKLVDSTFTPSSYSSTGSNANINNANNTALGRLPRPAGYPSTVSTVEGHGSPLSPAVRAQEAAWKLSSKRCHSQESQIAMACQEGASQDDNYDVRIGEDAECCSEPSLLSTEMLSYQDDENRQLAPPEEEKRDIRLSPKKGFLRSASLGRRASFHLECLKRQKNQGGDISQKTVLPLHLVHHQALAVAGLSPLLQRSHSPTSLPRPCATPPATPGSRGWPPQPIPTLRLEGADSSEKLNSSFPSIHCGSWSGENSPCRGDSSAARRARPVSLTVPSQAGAQGRQFHGSASSLVEAVLISEGLGQFAQDPKFIEVTTQELADACDLTIEEMENAADDILSGGARQSPNGTLLPFVNRRDPGRDRAGQNEQDASGACAPGCGQSEEALADRRAGVSSL.

The Cytoplasmic portion of the chain corresponds to 1–154 (MLRALVQPAT…RACISIVEWK (154 aa)). Residues 77 to 98 (GAALSWQAAIDAARQAKLMGSA) are calmodulin-binding. Residues 103 to 128 (ISTVSSTQRKRQQYGKPKKQGSTTAT) are disordered. Residues 110-121 (QRKRQQYGKPKK) show a composition bias toward basic residues. One copy of the I repeat lies at 141 to 438 (NPIRRACISI…LVLGVLSGEF (298 aa)). A helical membrane pass occupies residues 155 to 173 (PFEIIILLTIFANCVALAI). Residues 174–188 (YIPFPEDDSNATNSN) lie on the Extracellular side of the membrane. Asparagine 183 carries an N-linked (GlcNAc...) asparagine glycan. The helical transmembrane segment at 189 to 209 (LERVEYLFLIIFTVEAFLKVI) threads the bilayer. The Cytoplasmic segment spans residues 210 to 218 (AYGLLFHPN). A helical membrane pass occupies residues 219–239 (AYLRNGWNLLDFIIVVVGLFS). The Extracellular portion of the chain corresponds to 240-262 (AILEQATKADGANALGGKGAGFD). Residues 263 to 281 (VKALRAFRVLRPLRLVSGV) traverse the membrane as a helical segment. The Cytoplasmic portion of the chain corresponds to 282–298 (PSLQVVLNSIIKAMVPL). A helical membrane pass occupies residues 299–320 (LHIALLVLFVIIIYAIIGLELF). At 321 to 380 (MGKMHKTCYNQEGVADVPAEDDPSPCALETGHGRQCQNGTVCKPGWDGPKHGITNFDNFA) the chain is on the extracellular side. Intrachain disulfides connect cysteine 328–cysteine 356 and cysteine 346–cysteine 362. N-linked (GlcNAc...) asparagine glycosylation occurs at asparagine 358. The segment at residues 381–402 (FAMLTVFQCITMEGWTDVLYWM) is an intramembrane region (pore-forming). Positions 391-394 (TMEG) match the Selectivity filter of repeat I motif. Glutamate 393 contacts Ca(2+). Topologically, residues 403-410 (QDAMGYEL) are extracellular. The helical transmembrane segment at 411–431 (PWVYFVSLVIFGSFFVLNLVL) threads the bilayer. Residues 432–554 (GVLSGEFSKE…RKCRAAVKSN (123 aa)) are Cytoplasmic-facing. The interval 458–475 (QQLEEDLKGYLDWITQAE) is AID/alpha-interaction domain; mediates interaction with the beta subunit. The interval 479–511 (PENEDEGMDEEKPRNMSMPTSETESVNTENVAG) is disordered. Residues 495 to 508 (SMPTSETESVNTEN) show a composition bias toward polar residues. Position 499 is a phosphoserine (serine 499). Residue threonine 506 is modified to Phosphothreonine. An II repeat occupies 540-786 (NRFCRRKCRA…VFLAIAVDNL (247 aa)). The chain crosses the membrane as a helical span at residues 555-573 (VFYWLVIFLVFLNTLTIAS). Residues 574–584 (EHYNQPHWLTE) lie on the Extracellular side of the membrane. The chain crosses the membrane as a helical span at residues 585–605 (VQDTANKALLALFTAEMLLKM). The Cytoplasmic segment spans residues 606–616 (YSLGLQAYFVS). Residues 617-636 (LFNRFDCFIVCGGILETILV) traverse the membrane as a helical segment. The Extracellular segment spans residues 637-645 (ETKVMSPLG). The chain crosses the membrane as a helical span at residues 646-664 (ISVLRCVRLLRIFKITRYW). Topologically, residues 665-683 (NSLSNLVASLLNSVRSIAS) are cytoplasmic. The helical transmembrane segment at 684-703 (LLLLLFLFIIIFSLLGMQLF) threads the bilayer. At 704-723 (GGKFNFDEMQTRRSTFDNFP) the chain is on the extracellular side. The pore-forming intramembrane region spans 724–745 (QSLLTVFQILTGEDWNSVMYDG). A Selectivity filter of repeat II motif is present at residues 734-737 (TGED). Glutamate 736 serves as a coordination point for Ca(2+). The Extracellular portion of the chain corresponds to 746-755 (IMAYGGPSFP). Residues 756–775 (GMLVCIYFIILFICGNYILL) traverse the membrane as a helical segment. Residues 776-930 (NVFLAIAVDN…LQCHRIVNDT (155 aa)) lie on the Cytoplasmic side of the membrane. The interval 794–891 (SAQKEEEEEK…EMPVGPRPRP (98 aa)) is disordered. Over residues 813 to 836 (SPEKKQEVVGKPALEEAKEEKIEL) the composition is skewed to basic and acidic residues. Serine 838 and serine 845 each carry phosphoserine. The interval 859–906 (NESEDKSPYPNPETTGEEDEEEPEMPVGPRPRPLSELHLKEKAVPMPE) is interaction with STAC2. The segment covering 873–882 (TGEEDEEEPE) has biased composition (acidic residues). The III repeat unit spans residues 917 to 1199 (NRFRLQCHRI…IFVGFVIVTF (283 aa)). Residues 931–949 (IFTNLILFFILLSSISLAA) form a helical membrane-spanning segment. Residues 950 to 961 (EDPVQHTSFRNH) are Extracellular-facing. A helical membrane pass occupies residues 962–981 (ILFYFDIVFTTIFTIEIALK). At 982 to 997 (MTAYGAFLHKGSFCRN) the chain is on the cytoplasmic side. The chain crosses the membrane as a helical span at residues 998 to 1016 (YFNILDLLVVSVSLISFGI). The Extracellular segment spans residues 1017–1023 (QSSAINV). The helical transmembrane segment at 1024–1042 (VKILRVLRVLRPLRAINRA) threads the bilayer. Residues 1043–1061 (KGLKHVVQCVFVAIRTIGN) lie on the Cytoplasmic side of the membrane. Residues 1062–1081 (IVIVTTLLQFMFACIGVQLF) form a helical membrane-spanning segment. The Extracellular segment spans residues 1082–1131 (KGKLYTCSDSSKQTEAECKGNYITYKDGEVDHPIIQPRSWENSKFDFDNV). A disulfide bridge links cysteine 1088 with cysteine 1099. Residues 1119 to 1208 (RSWENSKFDF…FQEQGEQEYK (90 aa)) form a dihydropyridine binding region. Residues 1132–1152 (LAAMMALFTVSTFEGWPELLY) constitute an intramembrane region (pore-forming). The Selectivity filter of repeat III signature appears at 1143-1146 (TFEG). Position 1145 (glutamate 1145) interacts with Ca(2+). Topologically, residues 1153–1169 (RSIDSHTEDKGPIYNYR) are extracellular. A helical membrane pass occupies residues 1170–1191 (VEISIFFIIYIIIIAFFMMNIF). Topologically, residues 1192-1249 (VGFVIVTFQEQGEQEYKNCELDKNQRQCVEYALKARPLRRYIPKNQHQYKVWYVVNST) are cytoplasmic. One copy of the IV repeat lies at 1236–1509 (NQHQYKVWYV…LFVAVIMDNF (274 aa)). A helical transmembrane segment spans residues 1250–1271 (YFEYLMFVLILLNTICLAMQHY). Residues 1272-1279 (GQSCLFKI) lie on the Extracellular side of the membrane. A helical transmembrane segment spans residues 1280–1301 (AMNILNMLFTGLFTVEMILKLI). Over 1302–1311 (AFKPKGYFSD) the chain is Cytoplasmic. Residues 1312–1331 (PWNVFDFLIVIGSIIDVILS) form a helical membrane-spanning segment. Over 1332–1354 (ETNPAEHTQCSPSMNAEENSRIS) the chain is Extracellular. Residues 1355 to 1373 (ITFFRLFRVMRLVKLLSRG) form a helical membrane-spanning segment. Residues 1374-1391 (EGIRTLLWTFIKSFQALP) lie on the Cytoplasmic side of the membrane. The chain crosses the membrane as a helical span at residues 1392–1412 (YVALLIVMLFFIYAVIGMQVF). Over 1413–1434 (GKIALNDTTEINRNNNFQTFPQ) the chain is Extracellular. Asparagine 1418 carries N-linked (GlcNAc...) asparagine glycosylation. Positions 1435–1453 (AVLLLFRCATGEAWQDIML) form an intramembrane region, pore-forming. A Selectivity filter of repeat IV motif is present at residues 1444 to 1447 (TGEA). Residues 1454-1481 (ACMPGKKCAPESEPHNSTEGETPCGSSF) lie on the Extracellular side of the membrane. Residues 1460 to 1528 (KCAPESEPHN…LGPHHLDEFK (69 aa)) are dihydropyridine binding. Residues cysteine 1461 and cysteine 1477 are joined by a disulfide bond. An N-linked (GlcNAc...) asparagine glycan is attached at asparagine 1469. The tract at residues 1474–1516 (ETPCGSSFAVFYFISFYMLCAFLIINLFVAVIMDNFDYLTRDW) is phenylalkylamine binding. Residues 1482 to 1506 (AVFYFISFYMLCAFLIINLFVAVIM) traverse the membrane as a helical segment. The Cytoplasmic segment spans residues 1507–2171 (DNFDYLTRDW…ADRRAGVSSL (665 aa)). An important for interaction with STAC1, STAC2 and STAC3 region spans residues 1641 to 1668 (DEVTVGKFYATFLIQEYFRKFKKRKEQG). Residues 1647-1667 (KFYATFLIQEYFRKFKKRKEQ) are calmodulin-binding IQ region. The interval 1681–1700 (LQAGLRTLHDIGPEIRRAIS) is important for localization in at the junctional membrane. 2 positions are modified to phosphoserine: serine 1700 and serine 1721. The interval 1760–1797 (ISKAGNNQGDTESPSHEKLVDSTFTPSSYSSTGSNANI) is disordered. The segment covering 1781–1793 (STFTPSSYSSTGS) has biased composition (polar residues). Serine 1928 is subject to Phosphoserine; by PKA. 3 disordered regions span residues 1971-2014 (RSHS…EKLN), 2026-2060 (SGENSPCRGDSSAARRARPVSLTVPSQAGAQGRQF), and 2114-2155 (SGGA…PGCG). Over residues 2130-2140 (NRRDPGRDRAG) the composition is skewed to basic and acidic residues.

This sequence belongs to the calcium channel alpha-1 subunit (TC 1.A.1.11) family. CACNA1C subfamily. In terms of assembly, component of a calcium channel complex consisting of a pore-forming alpha subunit (CACNA1C) and ancillary beta, gamma and delta subunits. The channel complex contains alpha, beta, gamma and delta subunits in a 1:1:1:1 ratio, i.e. it contains only one of each type of subunit. CACNA1C channel activity is modulated by ancillary subunits, such as CACNB1, CACNB2, CACNB3, CACNA2D1 and CACNA2D4. Interacts with CACNB1. Interacts with CACNB2. Identified in a complex with CACNA2D4 and CACNB3. Interacts with CACNB3. Interacts with CACNA2D1. Interacts with the gamma subunits CACNG4, CACNG6, CACNG7 and CACNG8. Interacts with CACNA2D4. Interacts with CALM1. Interacts (via the N-terminus and the C-terminal C and IQ motifs) with CABP1; this inhibits Ca(2+)-dependent channel inactivation. The binding via the C motif is calcium independent whereas the binding via IQ requires the presence of calcium and is mutually exclusive with calmodulin binding. The binding to the cytoplasmic N-terminal domain is calcium independent but is essential for the channel modulation. Interacts (via C-terminal CDB motif) with CABP5; in a calcium-dependent manner. Interacts with CIB1; the interaction increases upon cardiomyocytes hypertrophy. Interacts with STAC1, STAC2 and STAC3; this inhibits channel inactivation, probably by hindering CALM1 binding. Post-translationally, phosphorylation by PKA at Ser-1928 activates the channel. Elevated levels of blood glucose lead to increased phosphorylation by PKA. As to expression, expression in cardiac muscle. In lung, expressed in airway and vascular smooth muscle cells.

Its subcellular location is the cell membrane. It localises to the sarcolemma. The protein resides in the perikaryon. It is found in the postsynaptic density membrane. The protein localises to the cell projection. Its subcellular location is the dendrite. It localises to the T-tubule. It carries out the reaction Ca(2+)(in) = Ca(2+)(out). Its activity is regulated as follows. Inhibited by dihydropyridines (DHP), such as isradipine. Inhibited by nifedipine. Channel activity is regulated by Ca(2+) and calmodulin. Binding of STAC1, STAC2 or STAC3 to a region that overlaps with the calmodulin binding site inhibits channel inactivation by Ca(2+) and calmodulin. Binding of calmodulin or CABP1 at the same regulatory sites results in opposite effects on the channel function. Shear stress and pressure increases calcium channel activity. Functionally, pore-forming, alpha-1C subunit of the voltage-gated calcium channel that gives rise to L-type calcium currents. Mediates influx of calcium ions into the cytoplasm, and thereby triggers calcium release from the sarcoplasm. Plays an important role in excitation-contraction coupling in the heart. Required for normal heart development and normal regulation of heart rhythm. Required for normal contraction of smooth muscle cells in blood vessels and in the intestine. Essential for normal blood pressure regulation via its role in the contraction of arterial smooth muscle cells. Long-lasting (L-type) calcium channels belong to the 'high-voltage activated' (HVA) group. The sequence is that of Voltage-dependent L-type calcium channel subunit alpha-1C (CACNA1C) from Oryctolagus cuniculus (Rabbit).